A 756-amino-acid chain; its full sequence is NUT family member 2F (756 aa).

Disordered regions lie at residues Gly-173 to Ser-200, Ile-293 to Pro-438, Arg-511 to Met-639, and Arg-653 to Gln-756. Positions Ser-304–Pro-321 are enriched in pro residues. Residues Glu-417–Gln-427 show a composition bias toward basic and acidic residues. Polar residues predominate over residues Gln-543–Gln-560. The segment covering Leu-654–Leu-665 has biased composition (low complexity). Residues Ser-746–Gln-756 are compositionally biased toward basic residues.

The protein belongs to the NUT family.

This chain is NUT family member 2F (NUTM2F), found in Homo sapiens (Human).